A 264-amino-acid polypeptide reads, in one-letter code: Putative hydro-lyase Psyr_0498 (264 aa).

This sequence belongs to the D-glutamate cyclase family.

This Pseudomonas syringae pv. syringae (strain B728a) protein is Putative hydro-lyase Psyr_0498.